Consider the following 261-residue polypeptide: Acyl-[acyl-carrier-protein]--UDP-N-acetylglucosamine O-acyltransferase (261 aa).

Belongs to the transferase hexapeptide repeat family. LpxA subfamily. In terms of assembly, homotrimer.

The protein resides in the cytoplasm. The enzyme catalyses a (3R)-hydroxyacyl-[ACP] + UDP-N-acetyl-alpha-D-glucosamine = a UDP-3-O-[(3R)-3-hydroxyacyl]-N-acetyl-alpha-D-glucosamine + holo-[ACP]. The protein operates within glycolipid biosynthesis; lipid IV(A) biosynthesis; lipid IV(A) from (3R)-3-hydroxytetradecanoyl-[acyl-carrier-protein] and UDP-N-acetyl-alpha-D-glucosamine: step 1/6. Involved in the biosynthesis of lipid A, a phosphorylated glycolipid that anchors the lipopolysaccharide to the outer membrane of the cell. This is Acyl-[acyl-carrier-protein]--UDP-N-acetylglucosamine O-acyltransferase from Aquifex aeolicus (strain VF5).